Reading from the N-terminus, the 719-residue chain is Disintegrin and metalloproteinase domain-containing protein 18 (719 aa).

The signal sequence occupies residues 1–19; the sequence is MPLLFILAELAMLFARLDS. Residues 20–179 constitute a propeptide that is removed on maturation; it reads EGICLHITVP…QDKNHSQLLP (160 aa). 7 N-linked (GlcNAc...) asparagine glycosylation sites follow: asparagine 61, asparagine 75, asparagine 121, asparagine 152, asparagine 173, asparagine 244, and asparagine 331. The Extracellular segment spans residues 173–683; sequence NHSQLLPQSL…TKRLSKNEDS (511 aa). Residues 180–378 enclose the Peptidase M12B domain; that stretch reads QSLKLHIIVG…FDTQCLGDLS (199 aa). Cystine bridges form between cysteine 289-cysteine 373, cysteine 332-cysteine 357, and cysteine 334-cysteine 339. 2 N-linked (GlcNAc...) asparagine glycosylation sites follow: asparagine 356 and asparagine 405. The Disintegrin domain occupies 387 to 476; that stretch reads QAVCGNGIME…HCVPDTFALN (90 aa). An intrachain disulfide couples cysteine 447 to cysteine 468. Residues asparagine 607, asparagine 614, and asparagine 621 are each glycosylated (N-linked (GlcNAc...) asparagine). The EGF-like domain occupies 616–650; sequence TGNDCNATKKCKGNGICNNFGNCQCFPDYRPPDCN. 3 disulfide bridges follow: cysteine 620-cysteine 632, cysteine 626-cysteine 638, and cysteine 640-cysteine 649. A helical transmembrane segment spans residues 684 to 704; sequence WVILGFFIFLPFIVTFLVGIM. The Cytoplasmic segment spans residues 705-719; that stretch reads KRNERKIVPQGEHKI.

The prodomain and the metalloprotease-like domain are cleaved during the epididymal maturation of the spermatozoa. In terms of tissue distribution, expressed specifically in testis.

It localises to the membrane. Sperm surface membrane protein that may be involved in spermatogenesis and fertilization. This is a non catalytic metalloprotease-like protein. The chain is Disintegrin and metalloproteinase domain-containing protein 18 (Adam18) from Mus musculus (Mouse).